The following is a 33-amino-acid chain: Brevinin-2JD (33 aa).

An intrachain disulfide couples Cys-27 to Cys-33.

In terms of tissue distribution, expressed by the skin glands.

The protein resides in the secreted. Has antibacterial activity against E.coli ATCC 25992 (MIC=38 uM), E.coli CIB 84492 (MIC=38 uM), S.aureus ATCC 25923 (MIC=19 uM) and S.aureus CIB 85462 (MIC=19 uM). Has antifungal activity against C.albicans (MIC=19 uM). Has weak hemolytic activity against rabbit erythrocytes. The chain is Brevinin-2JD from Odorrana jingdongensis (Jingdong frog).